A 130-amino-acid polypeptide reads, in one-letter code: UPF0251 protein Mevan_1492 (130 aa).

The protein belongs to the UPF0251 family.

The polypeptide is UPF0251 protein Mevan_1492 (Methanococcus vannielii (strain ATCC 35089 / DSM 1224 / JCM 13029 / OCM 148 / SB)).